An 88-amino-acid polypeptide reads, in one-letter code: Putative membrane protein insertion efficiency factor (88 aa).

Residues 67–88 (LNAGGYDPVPPKSDNHSKENKK) form a disordered region. The span at 79–88 (SDNHSKENKK) shows a compositional bias: basic and acidic residues.

This sequence belongs to the UPF0161 family.

It is found in the cell inner membrane. Could be involved in insertion of integral membrane proteins into the membrane. This Actinobacillus succinogenes (strain ATCC 55618 / DSM 22257 / CCUG 43843 / 130Z) protein is Putative membrane protein insertion efficiency factor.